A 725-amino-acid chain; its full sequence is MRLSRIGTPKVSVTRVIPVRNVVIARRKPVRASNTDAKTWLMKEEQRRIRQKEQEMKQRLEELERFKTKVQKSYIRKEDRHLAQEIEKDLDIITDDYNLDSDVDLVFGELMQAEEQPKSLKSLPGASDASDNTDKSVELFSFPSPNLTLPEKVIHHIGPLVKHISNPENIQWGRLLLDLEKNQGFNGLSAVDVTRLIQNIPKEEKYQHMSLIHEMMFNSGISPDRYLTDLMMTAFSERSYYEPLVEALFQDYDINGWAPTDYTFGALIKVYSKGKKLDKINNLLNQMKLKYHKEPNKKIYTMVLQTCMKIDDYKKTSEVFDAMKFNSVATNPDTTAYGSMILMHVLNDNVEAALDLYDNLETEPDETILLALARGCSSRKVLINRGWDFIIEYYKRKFPLNEKLMTVMMYLTSRDGDLSLTRAIYNTIHESRFKMTESFSMNKNDGIALNVLLRGYFKYPDNHTVQSKTNDAVVALRRSTLALNHFGYHPKATPFLPVNELEEKHILPEVQAIWSYIILHYPDIVTSELVGTYLMILATRGSMADFNKAFEELTLKPVFEQVDNAVAVEEESEQSSELSDLRLTPLAIRLSSNIQIKYPRNHDIYHIALQACINNKDIELGQRIWQERGRFRKTPEFSMQPRNVKHNQDFEFARDMLKLLVNCNELNDACRLLLSTETQFNWEWTYVKPVYIMAEQLGDEYAKKVVRRVVRNKKSKWREEYLQGM.

Residues 1–21 (MRLSRIGTPKVSVTRVIPVRN) constitute a mitochondrion transit peptide. PPR repeat units follow at residues 189–223 (SAVD…GISP), 224–259 (DRYL…GWAP), 260–290 (TDYT…MKLK), 296–330 (NKKI…SVAT), 333–363 (DTTA…LETE), 401–435 (NEKL…RFKM), and 601–635 (NHDI…RKTP).

The protein belongs to the CCM1 family. In terms of assembly, binds to mitochondrial small subunit 15S rRNA.

The protein localises to the mitochondrion. In terms of biological role, regulates mitochondrial small subunit maturation by controlling 15S rRNA 5'-end processing. Localizes to the 5' precursor of the 15S rRNA in a position that is subsequently occupied by mS47 in the mature yeast mtSSU. Uses structure and sequence-specific RNA recognition, binding to a single-stranded region of the precursor and specifically recognizing bases -6 to -1. The exchange of Ccm1 for mS47 is coupled to the irreversible removal of precursor rRNA that is accompanied by conformational changes of the mitoribosomal proteins uS5m and mS26. These conformational changes signal completion of 5'-end rRNA processing through protection of the mature 5'-end of the 15S rRNA and stabilization of mS47. The removal of the 5' precursor together with the dissociation of Ccm1 may be catalyzed by the 5'-3' exoribonuclease Pet127. Involved in the specific removal of group I introns in mitochondrial encoded transcripts. This Komagataella phaffii (strain GS115 / ATCC 20864) (Yeast) protein is Mitochondrial 15S rRNA processing factor CCM1 (CCM1).